The primary structure comprises 242 residues: RxLR effector protein PexRD15 (242 aa).

A signal peptide spans 1–24 (MMKSLYAVNLVLLLLLAFFAPAPA). A RxLR-dEER motif is present at residues 48–66 (RLLRAHSSDKEEQKEEEER).

This sequence belongs to the RxLR effector family.

It localises to the secreted. It is found in the host cell membrane. Effector that enhances P.infestans colonization of Nicotiana benthamiana leaves. The polypeptide is RxLR effector protein PexRD15 (Phytophthora infestans (strain T30-4) (Potato late blight agent)).